The chain runs to 557 residues: DNA ligase (557 aa).

Glu251 serves as a coordination point for ATP. Lys253 (N6-AMP-lysine intermediate) is an active-site residue. Positions 258, 273, 303, 342, 418, and 424 each coordinate ATP.

Belongs to the ATP-dependent DNA ligase family. Mg(2+) serves as cofactor.

The catalysed reaction is ATP + (deoxyribonucleotide)n-3'-hydroxyl + 5'-phospho-(deoxyribonucleotide)m = (deoxyribonucleotide)n+m + AMP + diphosphate.. In terms of biological role, DNA ligase that seals nicks in double-stranded DNA during DNA replication, DNA recombination and DNA repair. In Methanosphaera stadtmanae (strain ATCC 43021 / DSM 3091 / JCM 11832 / MCB-3), this protein is DNA ligase.